We begin with the raw amino-acid sequence, 81 residues long: U-poneritoxin(01)-Om6a (81 aa).

The first 21 residues, 1–21, serve as a signal peptide directing secretion; it reads MRRSYVLLAFAIVLIISIISA. The propeptide occupies 22–43; sequence QVEADASSDAFADAVADAVADP. A79 carries the post-translational modification Alanine amide.

It belongs to the formicidae venom precursor-01 superfamily. Post-translationally, truncated sequences of this peptide have also been found in the venom. It is possible they have been cleaved in the venom. As to expression, expressed by the venom gland.

The protein localises to the secreted. In terms of biological role, cationic amphipathic alpha-helical peptide with antimicrobial activities against E.coli (MIC=3.1), and S.aureus (MIC=3.1 uM). Also shows histamine-releasing activity (33.6% at 10 uM). Does not have activity against S.cerevisiae. Does not show hemolytic activity, even at 50 uM. This chain is U-poneritoxin(01)-Om6a, found in Odontomachus monticola (Trap-jaw ant).